The primary structure comprises 319 residues: MAHINCTQATEFILVGLTDHQELKMPLFVLFLSIYLFTVVGNLGLILLIRADTSLNTPMYFFLSNLAFVDFCYSSVITPKMLGNFLYKQNVISFDACATQLGCFLTFMVSESLLLASMAYDRYVAICNPLLYMVVMTPGICIQLVAVPYSYSFLMALFHTILTFRLSYCHSNIVNHFYCDDMPLLRLTCSDTRFKQLWILACAGITFICSVLIVFVSYMFIIFAILRMSSAEGRRKAFSTCSSHMLAVTIFYGTLIFMYLQPSSSHSLDADKMASVFYTVIIPMLNPLIYSLRNKDVKDALKKVIINRNHAFIFLKLRK.

The Extracellular segment spans residues 1–28 (MAHINCTQATEFILVGLTDHQELKMPLF). Asn5 is a glycosylation site (N-linked (GlcNAc...) asparagine). A helical membrane pass occupies residues 29-49 (VLFLSIYLFTVVGNLGLILLI). The Cytoplasmic portion of the chain corresponds to 50 to 56 (RADTSLN). The chain crosses the membrane as a helical span at residues 57–77 (TPMYFFLSNLAFVDFCYSSVI). Topologically, residues 78 to 97 (TPKMLGNFLYKQNVISFDAC) are extracellular. A disulfide bridge connects residues Cys97 and Cys179. A helical transmembrane segment spans residues 98–118 (ATQLGCFLTFMVSESLLLASM). At 119–122 (AYDR) the chain is on the cytoplasmic side. The helical transmembrane segment at 123–143 (YVAICNPLLYMVVMTPGICIQ) threads the bilayer. Residues 144–204 (LVAVPYSYSF…KQLWILACAG (61 aa)) are Extracellular-facing. The helical transmembrane segment at 205–225 (ITFICSVLIVFVSYMFIIFAI) threads the bilayer. Residues 226 to 239 (LRMSSAEGRRKAFS) lie on the Cytoplasmic side of the membrane. The chain crosses the membrane as a helical span at residues 240–260 (TCSSHMLAVTIFYGTLIFMYL). The Extracellular segment spans residues 261-271 (QPSSSHSLDAD). A helical transmembrane segment spans residues 272-292 (KMASVFYTVIIPMLNPLIYSL). At 293-319 (RNKDVKDALKKVIINRNHAFIFLKLRK) the chain is on the cytoplasmic side.

This sequence belongs to the G-protein coupled receptor 1 family.

Its subcellular location is the cell membrane. Functionally, odorant receptor. The chain is Olfactory receptor 8U8 (OR8U8) from Homo sapiens (Human).